Reading from the N-terminus, the 105-residue chain is Met repressor (105 aa).

This sequence belongs to the MetJ family. In terms of assembly, homodimer.

The protein resides in the cytoplasm. In terms of biological role, this regulatory protein, when combined with SAM (S-adenosylmethionine) represses the expression of the methionine regulon and of enzymes involved in SAM synthesis. This Pectobacterium carotovorum subsp. carotovorum (strain PC1) protein is Met repressor.